Here is a 490-residue protein sequence, read N- to C-terminus: MKPKLMYQELKVPAEEPANELPMNEIEAWKAAEKKARWVLLVLILAVVGFGALMTQLFLWEYGDLHLFGPNQRPAPCYDPCEAVLVESIPEGLDFPNASTGNPSTSQAWLGLLAGAHSSLDIASFYWTLTNNDTHTQEPSAQQGEEVLRQLQTLAPKGVNVRIAVSKPNGPQPQTDLQALLQSGAQVRMVDMQKLTHGVLHTKFWVVDQTHFYLGSANMDWRSLTQVKELGVVMYNCSCLARDLTKIFEAYWFLGQAGSSIPSTWPRFYDTRYNQETPMEICLNGTPALAYLASAPPPLCPSGRTPDLKALLNVVDNARSFIYIAVMNYLPTLEFSHPHRFWPAIDDGLRRAAYERGVKVRLLVSCWRHSESSMRAFLLSLAALRDNHTHSDIQVKLFVVPADEAQARIPYARVNHNKYMVTERATYIGTSNWSGNYFTETAGTSLLVMQNGRGSLRSQLEAIFLRDWDSPYSHDLDASADSVGNACRLL.

The Cytoplasmic segment spans residues 1 to 38 (MKPKLMYQELKVPAEEPANELPMNEIEAWKAAEKKARW). Residues 39 to 59 (VLLVLILAVVGFGALMTQLFL) traverse the membrane as a helical; Signal-anchor for type II membrane protein segment. Residues 60 to 490 (WEYGDLHLFG…DSVGNACRLL (431 aa)) lie on the Lumenal side of the membrane. 2 disulfides stabilise this stretch: cysteine 77–cysteine 239 and cysteine 81–cysteine 237. N-linked (GlcNAc...) asparagine glycosylation is found at asparagine 97 and asparagine 132. The region spanning 196 to 223 (THGVLHTKFWVVDQTHFYLGSANMDWRS) is the PLD phosphodiesterase 1 domain. Catalysis depends on residues histidine 201, lysine 203, and aspartate 208. Histidine 201 acts as the Proton donor in catalysis. Phosphate-binding residues include histidine 201 and lysine 203. Asparagine 218 contacts phosphate. Asparagine 236, asparagine 284, and asparagine 387 each carry an N-linked (GlcNAc...) asparagine glycan. Cysteine 366 and cysteine 487 form a disulfide bridge. The region spanning 411–437 (YARVNHNKYMVTERATYIGTSNWSGNY) is the PLD phosphodiesterase 2 domain. Histidine 416 lines the phosphate pocket. The Nucleophile role is filled by histidine 416. Position 438 (phenylalanine 438) interacts with Mg(2+).

Belongs to the phospholipase D family. As to quaternary structure, homodimer. Interacts with APP. N-glycosylated. In terms of processing, proteolytically processed to a soluble form that is stable within endosomes and lysosomes. During transport through the secretory pathway becomes proteolysed by cysteine proteases, thereby releasing a stable soluble lysosomal lumenal polypeptide, whereas the transmembrane-bound fragment is rapidly degraded. Its transport route to lysosomes involves ubiquitination and the ESCRT complex. Post-translationally, ubiquitinated. Ubiquitination mediates sorting into lysosomes.

The protein resides in the endoplasmic reticulum membrane. It localises to the lysosome lumen. Its subcellular location is the early endosome membrane. It is found in the late endosome membrane. The protein localises to the golgi apparatus membrane. The protein resides in the endosome membrane. The enzyme catalyses Exonucleolytic cleavage in the 5'- to 3'-direction to yield nucleoside 3'-phosphates.. The catalysed reaction is a 5'-end 5'-dephospho-ribonucleotidyl-ribonucleotide-RNA + H2O = a ribonucleoside 3'-phosphate + a 5'-end dephospho-ribonucleoside-RNA + H(+). It catalyses the reaction a ribonucleoside 3'-phosphate-2'-3'-cyclophospho-GMP + H2O = a ribonucleoside 3'-phosphate + 2',3'-cyclophospho-GMP + H(+). It carries out the reaction a 5'-end 5'-dephospho-2'-deoxyribonucleotidyl-2'-deoxyribonucleotide in single-stranded DNA + H2O = a 5'-end dephospho-2'-deoxyribonucleoside in single-stranded DNA + a 2'-deoxyribonucleoside 3'-phosphate + H(+). The enzyme catalyses a 5'-end 5'-phospho-2'-deoxyribonucleotide in single-stranded DNA + H2O = a 5'-end 5'-dephospho-2'-deoxyribonucleotide in single-stranded DNA + phosphate. The catalysed reaction is a 3-lyso-sn-glycero-1-phospho-(3'-acyl-1'-sn-glycerol) + a 1-acyl-sn-glycerol = a 3-acyl-sn-glycero-1-phospho-(3'-acyl-1'-sn-glycerol) + glycerol. It catalyses the reaction 3-lyso-sn-glycero-1-phospho-(3'-(9Z-octadecenoyl)-1'-sn-glycerol) + 1-(9Z-octadecenoyl)-sn-glycerol = 3-(9Z-octadecenoyl)-sn-glycero-1-phospho-(3'-(9Z-octadecenoyl)-1'-sn-glycerol) + glycerol. Its function is as follows. 5'-&gt;3' exonuclease that hydrolyzes the phosphodiester bond of single-stranded DNA (ssDNA) and RNA molecules to form nucleoside 3'-monophosphates and 5'-end 5'-hydroxy deoxyribonucleotide/ribonucleotide fragments. Partially redundant with PLD4, can cleave all four nucleotides displaying higher efficiency for ssDNA and RNA fragments initiated with uridine and guanosine residues and lower efficiency for cytidine-initiated substrates. As a result, it does not always degrade polynucleotides to the single nucleotide level, it can stall at specific sites sparing certain fragments from exonucleolytic degradation. Processes self and pathogenic ssDNA and RNA molecules that reach the endolysosomal compartment via phagocytosis or autophagy and may serve as 'danger' signals for recognition by innate immune receptors such as toll-like receptors (TLRs). Degrades mitochondrial CpG-rich ssDNA fragments to prevent TLR9 activation and autoinflammatory response, but it can cleave viral RNA to generate ligands for TLR7 activation and initiate antiviral immune responses. In plasmacytoid dendritic cells, it cooperates with endonuclease RNASET2 to release 2',3'-cyclic guanosine monophosphate (2',3'-cGMP), a potent stimulatory ligand for TLR7. Produces 2',3'-cGMPs and cytidine-rich RNA fragments that occupy TLR7 ligand-binding pockets and trigger a signaling-competent state. Can exert polynucleotide phosphatase activity toward 5'-phosphorylated ssDNA substrates although at a slow rate. Transphosphatidylase that catalyzes the exchange with R to S stereo-inversion of the glycerol moiety between (S,R)-lysophosphatidylglycerol (LPG) and monoacylglycerol (MAG) substrates to yield (S,S)-bis(monoacylglycero)phosphate (BMP). Can synthesize a variety of (S,S)-BMPs representing the main phospholipid constituent of lysosomal intralumenal vesicle (ILV) membranes that bind acid hydrolases for lipid degradation. Regulates the homeostasis and interorganellar communication of the endolysosomal system with an overall impact on cellular removal of dysfunctional organelles via autophagy as well as proper protein and lipid turnover. May play a role in myotube formation in response to ER stress. This chain is 5'-3' exonuclease PLD3 (PLD3), found in Macaca fascicularis (Crab-eating macaque).